A 287-amino-acid chain; its full sequence is Gliotoxin thiomethyltransferase GtmA (287 aa).

Residues Thr27 and Ala54 each contribute to the S-adenosyl-L-methionine site. Cys55 and Cys80 are oxidised to a cystine. Residues Asp82, Met87, Asn109, Ala110, Ala126, and Arg248 each coordinate S-adenosyl-L-methionine.

This sequence belongs to the class I-like SAM-binding methyltransferase superfamily.

Its subcellular location is the cytoplasm. The enzyme catalyses a thiol + S-adenosyl-L-methionine = a methyl thioether + S-adenosyl-L-homocysteine + H(+). S-methyltransferase that catalyzes the irreversible conversion of the secondary metabolite gliotoxin to bis(methylthio)gliotoxin (BmGT). Gliotoxin, a member of the epipolythiodioxopiperazine (ETP) class of toxins, is characterized by a disulfide bridged cyclic dipeptide. Its thiol groups are essential for bioactivity, as they conjugate to sulfur-containing proteins, disturb the intracellular redox equilibrium, and generate reactive oxygen species by cycling between reduced and oxidized states. The enzyme prevents self-intoxication of the fungus by irreversible conversion of the toxic gliotoxin to a biologically inactive bis-thiomethylated derivative. Appears to negatively regulate gliotoxin biosynthesis. The chain is Gliotoxin thiomethyltransferase GtmA from Aspergillus fumigatus (strain ATCC MYA-4609 / CBS 101355 / FGSC A1100 / Af293) (Neosartorya fumigata).